The following is a 216-amino-acid chain: Uracil-DNA glycosylase (216 aa).

Asp-59 (proton acceptor) is an active-site residue.

This sequence belongs to the uracil-DNA glycosylase (UDG) superfamily. UNG family.

The protein resides in the cytoplasm. It catalyses the reaction Hydrolyzes single-stranded DNA or mismatched double-stranded DNA and polynucleotides, releasing free uracil.. Functionally, excises uracil residues from the DNA which can arise as a result of misincorporation of dUMP residues by DNA polymerase or due to deamination of cytosine. This is Uracil-DNA glycosylase from Staphylococcus epidermidis (strain ATCC 12228 / FDA PCI 1200).